The chain runs to 165 residues: NADH-quinone oxidoreductase subunit I (165 aa).

4Fe-4S ferredoxin-type domains lie at 57–86 (RRYE…IESD) and 96–125 (SRYD…ETHI). C66, C69, C72, C76, C105, C108, C111, and C115 together coordinate [4Fe-4S] cluster.

Belongs to the complex I 23 kDa subunit family. In terms of assembly, NDH-1 is composed of 14 different subunits. Subunits NuoA, H, J, K, L, M, N constitute the membrane sector of the complex. It depends on [4Fe-4S] cluster as a cofactor.

It is found in the cell inner membrane. It catalyses the reaction a quinone + NADH + 5 H(+)(in) = a quinol + NAD(+) + 4 H(+)(out). Functionally, NDH-1 shuttles electrons from NADH, via FMN and iron-sulfur (Fe-S) centers, to quinones in the respiratory chain. The immediate electron acceptor for the enzyme in this species is believed to be ubiquinone. Couples the redox reaction to proton translocation (for every two electrons transferred, four hydrogen ions are translocated across the cytoplasmic membrane), and thus conserves the redox energy in a proton gradient. The polypeptide is NADH-quinone oxidoreductase subunit I (Polaromonas naphthalenivorans (strain CJ2)).